A 258-amino-acid polypeptide reads, in one-letter code: Probable pectin methylesterase CGR3 (258 aa).

Topologically, residues 1–29 are cytoplasmic; sequence MSRRQVRRVGDSGSFPFVGALHSKSRSSP. A helical membrane pass occupies residues 30–50; that stretch reads LLSVCLVLVGACLLIGYAYSG. Residues 51 to 258 are Lumenal-facing; that stretch reads PGMFKSIREV…CQVFHLKPLH (208 aa). Residue N171 is glycosylated (N-linked (GlcNAc...) asparagine).

Belongs to the class I-like SAM-binding methyltransferase superfamily.

Its subcellular location is the golgi apparatus membrane. Together with CGR2, required for homogalacturonan pectins (HG) methylesterification in the Golgi apparatus prior to integration into cell walls, essential for general growth and development. Promotes petiole elongation. Impacts photosynthesis and respiration efficiency by influencing leaf mesophyll morphology and physiology; pectin methylesterification modulates both expansion and positioning of cells in leaves, probably by changing cell walls plasticity. This Arabidopsis thaliana (Mouse-ear cress) protein is Probable pectin methylesterase CGR3.